Here is a 613-residue protein sequence, read N- to C-terminus: Protein ECM3 (613 aa).

Helical transmembrane passes span 10–30, 74–94, 106–126, and 143–163; these read IWASVRPIIKIYLIIGVGFGL, GIICLTSVILFATGLGFAFIV, GGILAGGMFPNISDLPIAYLQ, and VANVIIFLAMFLICVFNLGGF. The interval 177 to 256 is disordered; it reads DEENTLTNDD…PAIDDRSSNS (80 aa). Polar residues-rich tracts occupy residues 187–206 and 213–226; these read SAQQPTQPIEGNSSSSSNQD and ESTVPNSSQASYIS. Ser-291 and Ser-338 each carry phosphoserine. Residues 345–366 form a disordered region; the sequence is RRRKSSISSQGAPSVLQADGTI. The next 4 helical transmembrane spans lie at 432–452, 471–491, 546–566, and 587–607; these read MAVILALIIAFIPWVKALFVT, FIMDFTSYVGAASVPFGLILL, MLLFVTAITWNLPTMTTLIYF, and FLMLQYPLMVVSLPFLVSYFI.

It is found in the endoplasmic reticulum membrane. Its function is as follows. May be involved in cell wall organization and biogenesis. The sequence is that of Protein ECM3 (ECM3) from Saccharomyces cerevisiae (strain ATCC 204508 / S288c) (Baker's yeast).